Here is a 562-residue protein sequence, read N- to C-terminus: Nucleoprotein (562 aa).

The interval 53-238 (MRRVKRDDSD…ITQEESQINI (186 aa)) is binding site for the cap structure m7GTP. 2 residues coordinate Mn(2+): aspartate 381 and glutamate 383. Glutamate 391, cysteine 498, histidine 501, and cysteine 522 together coordinate Zn(2+). Residue aspartate 526 coordinates Mn(2+).

This sequence belongs to the arenaviridae nucleocapsid protein family. Homomultimerizes to form the nucleocapsid. Binds to viral genomic RNA. Interacts with glycoprotein G2. Interacts with protein Z; this interaction probably directs the encapsidated genome to budding sites. Interacts with protein L; this interaction does not interfere with Z-L interaction. Interacts with host IKBKE (via Protein kinase domain); the interaction inhibits IKBKE kinase activity.

The protein resides in the virion. The protein localises to the host cytoplasm. In terms of biological role, encapsidates the genome, protecting it from nucleases. The encapsidated genomic RNA is termed the nucleocapsid (NC). Serves as template for viral transcription and replication. The increased presence of protein N in host cell does not seem to trigger the switch from transcription to replication as observed in other negative strain RNA viruses. Through the interaction with host IKBKE, strongly inhibits the phosphorylation and nuclear translocation of host IRF3, a protein involved in interferon activation pathway, leading to the inhibition of interferon-beta and IRF3-dependent promoters activation. Also encodes a functional 3'-5' exoribonuclease that degrades preferentially dsRNA substrates and thereby participates in the suppression of interferon induction. The protein is Nucleoprotein of Neotoma (wood rats).